Here is a 484-residue protein sequence, read N- to C-terminus: BAHD acyltransferase DCR (484 aa).

His168 (proton acceptor) is an active-site residue. The tract at residues 211–233 is disordered; that stretch reads LDLTAPKDPNETSNGEDAANPTV. Asp394 functions as the Proton acceptor in the catalytic mechanism. Residues 452 to 484 form a disordered region; the sequence is EEEEDDGKKLTNGNGHVNGNGNGYVNGNGNGFV. Residues 467-484 show a composition bias toward gly residues; sequence HVNGNGNGYVNGNGNGFV.

This sequence belongs to the plant acyltransferase family. Expressed in root caps and lateral root emerging sites, in trichomes, in epidermis in stems, sepals and anther filaments, and in pollen grains and torpedo stage seeds.

Its subcellular location is the cytoplasm. The protein resides in the cytosol. In terms of biological role, required for incorporation of 9(10),16-dihydroxy-hexadecanoic acid into cutin. This chain is BAHD acyltransferase DCR (DCR), found in Arabidopsis thaliana (Mouse-ear cress).